Reading from the N-terminus, the 295-residue chain is Myosin light chain kinase A (295 aa).

The 258-residue stretch at 8–265 (YEFKEELGRG…ATNALNHPWL (258 aa)) folds into the Protein kinase domain. Residues 14–22 (LGRGAFSIV) and Lys37 each bind ATP. Asp130 acts as the Proton acceptor in catalysis. A phosphothreonine mark is found at Thr166 and Thr289. The autoinhibitory domain stretch occupies residues 264 to 295 (WLKSNNSNNTIDTVKMKEYIVERQKTQTKLVN).

Belongs to the protein kinase superfamily. CAMK Ser/Thr protein kinase family. CaMK subfamily. Post-translationally, autophosphorylated. Transiently phosphorylated on Thr-166 and Thr-289. This phosphorylation is gbpC-dependent.

The enzyme catalyses L-seryl-[myosin light chain] + ATP = O-phospho-L-seryl-[myosin light chain] + ADP + H(+). It catalyses the reaction L-threonyl-[myosin light chain] + ATP = O-phospho-L-threonyl-[myosin light chain] + ADP + H(+). Its activity is regulated as follows. Possesses an autoinhibitory domain. Autophosphorylation appears to increase the enzymatic activity. Activation is gbdC-dependent. Does not have a calmodulin-binding domain. Functionally, phosphorylates a specific serine in the N-terminus of a myosin light chain. Phosphorylates regulatory myosin light chain (mlcR) during chemotaxis. mlcR phosphorylation increases the motility and actin-activated ATPase activity of myosin, contributing to chemotaxis. This Dictyostelium discoideum (Social amoeba) protein is Myosin light chain kinase A (mlkA).